The sequence spans 545 residues: Chaperonin GroEL (545 aa).

ATP contacts are provided by residues 29–32, lysine 50, 86–90, glycine 414, 477–479, and aspartate 493; these read TMGP, DGTTT, and DAA.

This sequence belongs to the chaperonin (HSP60) family. In terms of assembly, forms a cylinder of 14 subunits composed of two heptameric rings stacked back-to-back. Interacts with the co-chaperonin GroES.

It is found in the cytoplasm. The enzyme catalyses ATP + H2O + a folded polypeptide = ADP + phosphate + an unfolded polypeptide.. Together with its co-chaperonin GroES, plays an essential role in assisting protein folding. The GroEL-GroES system forms a nano-cage that allows encapsulation of the non-native substrate proteins and provides a physical environment optimized to promote and accelerate protein folding. This chain is Chaperonin GroEL, found in Campylobacter jejuni (strain RM1221).